The chain runs to 463 residues: ASVEYDNEEDSPQIDARAHRPLDKRQEAAPTLRPVAPPISGTGYQPRPPKQDKQAMKKGPIIYPDAGGCKHPLDELGVLCPTGCELQTTLLKQEKTVKPVLRDLKDRVAKFSDTSTTMYQYVNMIDNKLVKTQKQRKDNDIILSEYNTEMELHYNYIKDNLDNNIPSSLRVLRAVIDSLHKKIQKLENAIATQTDYCRSPCVASCNIPVVSGRECEDIYRKGGETSEMYIIQPDPFTTPYRVYCDMETDNGGWTLIQNRQDGSVNFGRAWDEYKRGFGNIAKSGGKKYCDTPGEYWLGNDKISQLTKIGPTKVLIEMEDWNGDKVSALYGGFTIHNEGNKYQLSVSNYKGNAGNALMEGASQLYGENRTMTIHNGMYFSTYDRDNDGWLTTDPRKQCSKEDGGGWWYNRCHAANPNGRYYWGGTYSWDMAKHGTDDGIVWMNWKGSWYSMKKMSMKIKPYFPD.

Acidic residues predominate over residues alanine 1 to proline 12. The interval alanine 1–methionine 56 is disordered. Position 5 is a sulfotyrosine (tyrosine 5). Positions alanine 16 to glutamate 27 are enriched in basic and acidic residues. 2 disulfides stabilise this stretch: cysteine 205–cysteine 289 and cysteine 215–cysteine 244. Residues asparagine 206 to phenylalanine 461 form the Fibrinogen C-terminal domain. The N-linked (GlcNAc...) asparagine glycan is linked to asparagine 367. Residues aspartate 384, aspartate 386, and tryptophan 388 each contribute to the Ca(2+) site. A disulfide bridge links cysteine 397 with cysteine 410.

As to quaternary structure, heterohexamer; disulfide linked. Contains 2 sets of 3 non-identical chains (alpha, beta and gamma). The 2 heterotrimers are in head to head conformation with the N-termini in a small central domain. Conversion of fibrinogen to fibrin is triggered by thrombin, which cleaves fibrinopeptides A and B from alpha and beta chains, and thus exposes the N-terminal polymerization sites responsible for the formation of the soft clot. The soft clot is converted into the hard clot by factor XIIIA which catalyzes the epsilon-(gamma-glutamyl)lysine cross-linking between gamma chains (stronger) and between alpha chains (weaker) of different monomers.

The protein resides in the secreted. Its function is as follows. Cleaved by the protease thrombin to yield monomers which, together with fibrinogen alpha (FGA) and fibrinogen gamma (FGG), polymerize to form an insoluble fibrin matrix. Fibrin has a major function in hemostasis as one of the primary components of blood clots. In Gallus gallus (Chicken), this protein is Fibrinogen beta chain (FGB).